Consider the following 430-residue polypeptide: Gamma-glutamyl phosphate reductase (430 aa).

The protein belongs to the gamma-glutamyl phosphate reductase family.

Its subcellular location is the cytoplasm. The catalysed reaction is L-glutamate 5-semialdehyde + phosphate + NADP(+) = L-glutamyl 5-phosphate + NADPH + H(+). It participates in amino-acid biosynthesis; L-proline biosynthesis; L-glutamate 5-semialdehyde from L-glutamate: step 2/2. In terms of biological role, catalyzes the NADPH-dependent reduction of L-glutamate 5-phosphate into L-glutamate 5-semialdehyde and phosphate. The product spontaneously undergoes cyclization to form 1-pyrroline-5-carboxylate. The polypeptide is Gamma-glutamyl phosphate reductase (Rhodopseudomonas palustris (strain HaA2)).